Consider the following 437-residue polypeptide: MKQHLWPLFLEAVKRDVVPALGCTEPISVALAAAIAIDELGIKNQASNVKLDVKIDVAVSANLMKNGMGVGIPGTGMVGLPIAAAIGAIAGDRHAGLEVLKSIKDSDVQAAKLMLANELVTVGVADVANILYAKVTVYYQQQTASVTIADSHTKVIAIEKNGEQCLLESQAKTTNDNSCKANPFTEAKLQDIYDFAMQAPLDDIRFIMQAKTLNDALSIEGLSGNYGLKIGATLVKNQAKGLLSGGLLTEVLARTAGASDARMDGAMMPAMSNSGSGNQGIAATMPVVACAEFLKSSETQTIRALMLSHLTAIYIKSYQNKLSALCGATTASMGAAAGITYLLDGELEQISAAICSMIGDVSGIICDGAKASCAMKVSSSAGSAVKSALMAIDGIRVTGTEGIVADDVDQTICNLATLANGAMTQTDVQILEIMLHK.

Belongs to the UPF0597 family.

This Shewanella halifaxensis (strain HAW-EB4) protein is UPF0597 protein Shal_0864.